The sequence spans 637 residues: Poly(A) polymerase beta (637 aa).

Positions 1–10 are enriched in low complexity; it reads MMPFPVTTQG. A disordered region spans residues 1–23; the sequence is MMPFPVTTQGPPQPAPPPNRYGV. ATP-binding positions include 101-103, Thr110, 114-116, Asp168, Lys229, Tyr238, and 247-248; these read FGS, DID, and GV. The Mg(2+) site is built by Asp114, Asp116, and Asp168. A disordered region spans residues 535-555; it reads SVPSSTSTMKTGPLISSSQGR.

The protein belongs to the poly(A) polymerase family. Interacts with GSG1. Mg(2+) serves as cofactor. Mn(2+) is required as a cofactor. In terms of tissue distribution, testis specific.

It localises to the nucleus. It catalyses the reaction RNA(n) + ATP = RNA(n)-3'-adenine ribonucleotide + diphosphate. In Homo sapiens (Human), this protein is Poly(A) polymerase beta.